The sequence spans 137 residues: Acidic phospholipase A2 Vur-PL3 (137 aa).

A signal peptide spans 1–16; sequence MRTLWIVAVCLIGVEG. 7 disulfide bridges follow: Cys-42-Cys-131, Cys-44-Cys-60, Cys-59-Cys-111, Cys-65-Cys-137, Cys-66-Cys-104, Cys-73-Cys-97, and Cys-91-Cys-102. Tyr-43, Gly-45, and Gly-47 together coordinate Ca(2+). His-63 is a catalytic residue. Asp-64 contacts Ca(2+). Residue Asp-105 is part of the active site.

The cofactor is Ca(2+). Expressed by the venom gland.

The protein localises to the secreted. It carries out the reaction a 1,2-diacyl-sn-glycero-3-phosphocholine + H2O = a 1-acyl-sn-glycero-3-phosphocholine + a fatty acid + H(+). The sequence is that of Acidic phospholipase A2 Vur-PL3 from Vipera renardi (Steppe viper).